A 281-amino-acid polypeptide reads, in one-letter code: Transformer-2 protein homolog alpha (281 aa).

Residues 1–116 are disordered; the sequence is MSDVEENNFE…TGSRANPDPN (116 aa). Ser-2 carries the N-acetylserine modification. Phosphoserine is present on residues Ser-2 and Ser-14. A Phosphothreonine modification is found at Thr-24. Residues 51–82 are compositionally biased toward basic residues; it reads RSRSKSRSRSRRHSHRRYTRSRSHSHRRRSRS. Phosphoserine is present on residues Ser-80, Ser-82, and Ser-84. At Thr-86 the chain carries Phosphothreonine. Positions 90–108 are enriched in basic residues; it reads RRRRSRSHSPMSNRRRHTG. Ser-94 and Ser-96 each carry phosphoserine. Positions 117–195 constitute an RRM domain; that stretch reads TCLGVFGLSL…RRIRVDYSIT (79 aa). Lys-196 is covalently cross-linked (Glycyl lysine isopeptide (Lys-Gly) (interchain with G-Cter in SUMO2)). The segment at 196–223 is linker; sequence KRAHTPTPGIYMGRPTHSGGGGGGGGGG. A disordered region spans residues 199–281; the sequence is HTPTPGIYMG…RSRSYSPRRY (83 aa). 2 positions are modified to phosphothreonine: Thr-200 and Thr-202. The segment covering 213–231 has biased composition (gly residues); sequence SGGGGGGGGGGGGGGGGGG. Arg-233 carries the post-translational modification Omega-N-methylarginine. Residues 233–257 are compositionally biased toward basic and acidic residues; that stretch reads RRRDSYYDRGYDRGYDRYEDYDYRR. Position 237 is a phosphoserine (Ser-237). The segment covering 267–281 has biased composition (basic residues); it reads YRSRSRSRSYSPRRY.

It belongs to the splicing factor SR family. As to quaternary structure, binds to A3 enhancer proteins SRp75, SRp55, SRp40 and SRp30. Interacts with ILDR1 (via C-terminus) and ILDR2. Phosphorylated in the RS domains. In terms of tissue distribution, expressed in inner ear.

It is found in the nucleus. Functionally, sequence-specific RNA-binding protein which participates in the control of pre-mRNA splicing. This is Transformer-2 protein homolog alpha from Mus musculus (Mouse).